A 538-amino-acid polypeptide reads, in one-letter code: Endoglucanase 16 (538 aa).

A signal peptide spans 1 to 26 (MRWRRVGDVVAVALLLGAAAAAAAAA). Residue Asp83 is the Nucleophile of the active site. Active-site residues include His431, Asp483, and Glu492. The disordered stretch occupies residues 513-538 (RQESPSTTTTTTATTSSPEMGLSVNR). A compositionally biased stretch (low complexity) spans 516 to 530 (SPSTTTTTTATTSSP).

It belongs to the glycosyl hydrolase 9 (cellulase E) family.

Its subcellular location is the secreted. It catalyses the reaction Endohydrolysis of (1-&gt;4)-beta-D-glucosidic linkages in cellulose, lichenin and cereal beta-D-glucans.. The protein is Endoglucanase 16 of Oryza sativa subsp. japonica (Rice).